We begin with the raw amino-acid sequence, 102 residues long: Iron-sulfur cluster assembly protein CyaY (102 aa).

The protein belongs to the frataxin family.

Its function is as follows. Involved in iron-sulfur (Fe-S) cluster assembly. May act as a regulator of Fe-S biogenesis. This Pasteurella multocida (strain Pm70) protein is Iron-sulfur cluster assembly protein CyaY.